The chain runs to 114 residues: rRNA-processing protein cgrA (114 aa).

The segment covering 1–13 has biased composition (low complexity); it reads MSSAAPAPSTHAA. 2 disordered regions span residues 1-47 and 77-114; these read MSSA…AARK and RRAAKEEKERYEKMAEKMHRKRVERLKKREKRNKLLNS. Positions 40–101 form a coiled coil; that stretch reads TKRAAARKEQ…EKMHRKRVER (62 aa). A compositionally biased stretch (basic and acidic residues) spans 77 to 93; it reads RRAAKEEKERYEKMAEK. Basic residues predominate over residues 94–114; that stretch reads MHRKRVERLKKREKRNKLLNS.

This sequence belongs to the CGR1 family.

It localises to the nucleus. The protein resides in the nucleolus. In terms of biological role, involved in nucleolar integrity and required for processing of the pre-rRNA for the 60S ribosome subunit. This chain is rRNA-processing protein cgrA (cgrA), found in Emericella nidulans (strain FGSC A4 / ATCC 38163 / CBS 112.46 / NRRL 194 / M139) (Aspergillus nidulans).